Consider the following 265-residue polypeptide: Phosphonates import ATP-binding protein PhnC 1 (265 aa).

Residues 7-252 enclose the ABC transporter domain; that stretch reads IEVSNLSKSF…KLNEIYGTAA (246 aa). 39 to 46 lines the ATP pocket; it reads GASGSGKS.

It belongs to the ABC transporter superfamily. Phosphonates importer (TC 3.A.1.9.1) family. As to quaternary structure, the complex is composed of two ATP-binding proteins (PhnC), two transmembrane proteins (PhnE) and a solute-binding protein (PhnD).

It localises to the cell inner membrane. It carries out the reaction phosphonate(out) + ATP + H2O = phosphonate(in) + ADP + phosphate + H(+). In terms of biological role, part of the ABC transporter complex PhnCDE involved in phosphonates import. Responsible for energy coupling to the transport system. The protein is Phosphonates import ATP-binding protein PhnC 1 of Nostoc sp. (strain PCC 7120 / SAG 25.82 / UTEX 2576).